A 471-amino-acid chain; its full sequence is Ubiquitin carboxyl-terminal hydrolase calypso (471 aa).

The UCH catalytic domain occupies 45–276 (GWLELESDPG…IRFNLMAVVP (232 aa)). Cysteine 131 serves as the catalytic Nucleophile. Residue histidine 213 is the Proton donor of the active site. The ULD domain occupies 375-403 (NYDKFICTFLSMLAHQGVLGELVSQHLLP). The segment at 405-471 (KKVSGQGAAN…KGRNKCRKRK (67 aa)) is positively charged C-terminal tail required for binding nucleosomes. Positions 410–471 (QGAANRISKQ…KGRNKCRKRK (62 aa)) are disordered. Residues 420–447 (STTASAGGSTTGATASTPKTQQQQAAAA) show a composition bias toward low complexity. Over residues 457 to 471 (PGRRRKGRNKCRKRK) the composition is skewed to basic residues.

It belongs to the peptidase C12 family. BAP1 subfamily. Catalytic component of the polycomb repressive deubiquitinase (PR-DUB) complex, at least composed of caly/calypso, Asx and sba (MBD5/6 homolog). The PR-DUB complex associates with nucleosomes to mediate deubiquitination of histone H2AK118ub1 substrates; the association requires the positively charged C-terminal tail of caly, probably due to direct binding of DNA. Interacts (via ULD domain) with Asx (via DEUBAD domain); the interaction produces a stable heterodimer with a composite binding site for ubiquitin. Homodimerizes (via coiled-coil hinge-region between the UCH and ULD domains) to mediate assembly of 2 copies of the caly-Asx heterodimer into a bisymmetric tetramer; dimerization enhances PR-DUB association with nucleosomes.

It localises to the nucleus. The enzyme catalyses Thiol-dependent hydrolysis of ester, thioester, amide, peptide and isopeptide bonds formed by the C-terminal Gly of ubiquitin (a 76-residue protein attached to proteins as an intracellular targeting signal).. Its function is as follows. Catalytic component of the polycomb repressive deubiquitinase (PR-DUB) complex, a complex that specifically mediates deubiquitination of histone H2A monoubiquitinated at 'Lys-119' (H2AK118ub1). Mediates bisymmetric organization of the PR-DUB complex and is involved in association with nucleosomes to mediate deubiquitination. Does not deubiquitinate monoubiquitinated histone H2B. Required to maintain the transcriptionally repressive state of homeotic genes throughout development. The PR-DUB complex has weak or no activity toward 'Lys-48'- and 'Lys-63'-linked polyubiquitin chains. Polycomb group (PcG) protein. The polypeptide is Ubiquitin carboxyl-terminal hydrolase calypso (Drosophila yakuba (Fruit fly)).